The sequence spans 543 residues: Hydroxylamine reductase (543 aa).

Cys-5, Cys-8, Cys-17, and Cys-23 together coordinate [4Fe-4S] cluster. His-236, Glu-260, Cys-304, Cys-398, Cys-426, Cys-451, Glu-486, and Lys-488 together coordinate hybrid [4Fe-2O-2S] cluster. Cys-398 bears the Cysteine persulfide mark.

It belongs to the HCP family. [4Fe-4S] cluster is required as a cofactor. The cofactor is hybrid [4Fe-2O-2S] cluster.

Its subcellular location is the cytoplasm. The catalysed reaction is A + NH4(+) + H2O = hydroxylamine + AH2 + H(+). Catalyzes the reduction of hydroxylamine to form NH(3) and H(2)O. This is Hydroxylamine reductase from Bacteroides fragilis (strain YCH46).